The following is a 58-amino-acid chain: Small ribosomal subunit protein bS21 (58 aa).

A disordered region spans residues 27–58 (GTLQELRKREHYEKPSVKRKRKSEAARKRKKY). Residues 31 to 42 (ELRKREHYEKPS) show a composition bias toward basic and acidic residues. Basic residues predominate over residues 43-58 (VKRKRKSEAARKRKKY).

Belongs to the bacterial ribosomal protein bS21 family.

This chain is Small ribosomal subunit protein bS21 (rpsU), found in Lactococcus lactis subsp. lactis (strain IL1403) (Streptococcus lactis).